Here is a 50-residue protein sequence, read N- to C-terminus: U37-theraphotoxin-Cg1b (50 aa).

A signal peptide spans 1–19 (MRVLLIIAGLALLSVVCYT).

This sequence belongs to the neurotoxin 10 (Hwtx-1) family. 67 (Jztx-67) subfamily. In terms of tissue distribution, expressed by the venom gland.

The protein resides in the secreted. This is U37-theraphotoxin-Cg1b from Chilobrachys guangxiensis (Chinese earth tiger tarantula).